The sequence spans 261 residues: Synaptophysin-like protein 1 (261 aa).

The Cytoplasmic segment spans residues 1–33 (MASKANMVRQRFSRLSQRMSAFQINLNPLKEPL). The region spanning 28-239 (PLKEPLGFIK…NAWFVYKETS (212 aa)) is the MARVEL domain. The helical transmembrane segment at 34 to 54 (GFIKILEWFASIFAFATCGGF) threads the bilayer. Over 55 to 117 (KGKTEIQVNC…LIGDYSSSAQ (63 aa)) the chain is Vesicular. Asn72 and Asn95 each carry an N-linked (GlcNAc...) asparagine glycan. Residues 118–138 (FYVTFAVFVFLYCIAALLLYV) traverse the membrane as a helical segment. Over 139 to 151 (GYTNLYRDSRKLP) the chain is Cytoplasmic. The helical transmembrane segment at 152-172 (MIDFIVTLVATFLWLVSSSAW) threads the bilayer. At 173-214 (AKALTDIKVATGHRIVEELEICNPESGVSCYFVSVTSMGSLN) the chain is on the vesicular side. Residue Asn214 is glycosylated (N-linked (GlcNAc...) asparagine). The chain crosses the membrane as a helical span at residues 215-235 (VSVIFGFLNMILWGGNAWFVY). At 236–261 (KETSLHSPSNTSASHSQGGGPPTSGM) the chain is on the cytoplasmic side. Residues 241 to 251 (HSPSNTSASHS) show a composition bias toward polar residues. The interval 241–261 (HSPSNTSASHSQGGGPPTSGM) is disordered. Positions 252-261 (QGGGPPTSGM) are enriched in gly residues.

This sequence belongs to the synaptophysin/synaptobrevin family. As to expression, ubiquitously expressed.

The protein localises to the cytoplasmic vesicle membrane. It localises to the melanosome. This chain is Synaptophysin-like protein 1 (Sypl1), found in Mus musculus (Mouse).